Reading from the N-terminus, the 491-residue chain is Ketol-acid reductoisomerase (NADP(+)) (491 aa).

The KARI N-terminal Rossmann domain occupies 15–208 (AQLGKCRFMG…GGHRAGVLES (194 aa)). NADP(+) is bound by residues 45–48 (CGAQ), arginine 68, arginine 76, serine 78, and 108–110 (DKQ). Residue histidine 132 is part of the active site. Position 158 (glycine 158) interacts with NADP(+). KARI C-terminal knotted domains are found at residues 209–344 (SFVA…TAPQ) and 345–484 (YEGK…MTDM). Residues aspartate 217, glutamate 221, glutamate 389, and glutamate 393 each contribute to the Mg(2+) site. Substrate is bound at residue serine 414.

Belongs to the ketol-acid reductoisomerase family. The cofactor is Mg(2+).

It catalyses the reaction (2R)-2,3-dihydroxy-3-methylbutanoate + NADP(+) = (2S)-2-acetolactate + NADPH + H(+). The catalysed reaction is (2R,3R)-2,3-dihydroxy-3-methylpentanoate + NADP(+) = (S)-2-ethyl-2-hydroxy-3-oxobutanoate + NADPH + H(+). The protein operates within amino-acid biosynthesis; L-isoleucine biosynthesis; L-isoleucine from 2-oxobutanoate: step 2/4. Its pathway is amino-acid biosynthesis; L-valine biosynthesis; L-valine from pyruvate: step 2/4. In terms of biological role, involved in the biosynthesis of branched-chain amino acids (BCAA). Catalyzes an alkyl-migration followed by a ketol-acid reduction of (S)-2-acetolactate (S2AL) to yield (R)-2,3-dihydroxy-isovalerate. In the isomerase reaction, S2AL is rearranged via a Mg-dependent methyl migration to produce 3-hydroxy-3-methyl-2-ketobutyrate (HMKB). In the reductase reaction, this 2-ketoacid undergoes a metal-dependent reduction by NADPH to yield (R)-2,3-dihydroxy-isovalerate. The protein is Ketol-acid reductoisomerase (NADP(+)) of Escherichia coli O157:H7.